The following is a 96-amino-acid chain: Large ribosomal subunit protein uL23 (96 aa).

The protein belongs to the universal ribosomal protein uL23 family. In terms of assembly, part of the 50S ribosomal subunit. Contacts protein L29, and trigger factor when it is bound to the ribosome.

Functionally, one of the early assembly proteins it binds 23S rRNA. One of the proteins that surrounds the polypeptide exit tunnel on the outside of the ribosome. Forms the main docking site for trigger factor binding to the ribosome. This Thermus thermophilus (strain ATCC BAA-163 / DSM 7039 / HB27) protein is Large ribosomal subunit protein uL23.